The primary structure comprises 433 residues: Probable RNA 3'-terminal phosphate cyclase (433 aa).

Positions 1–10 (MGKNKNYNKN) are enriched in low complexity. The disordered stretch occupies residues 1-28 (MGKNKNYNKNQFKKSKTNNDTTVAQQQQ). The span at 18–28 (NNDTTVAQQQQ) shows a compositional bias: polar residues. Residues glutamine 137 and 328–332 (YLQDQ) contribute to the ATP site. Residue histidine 354 is the Tele-AMP-histidine intermediate of the active site. The tract at residues 400 to 433 (LNNNNNNSNSNTTTTTTTTTISTTTIDNQNSEEK) is disordered. The span at 401–425 (NNNNNNSNSNTTTTTTTTTISTTTI) shows a compositional bias: low complexity.

Belongs to the RNA 3'-terminal cyclase family. Type 1 subfamily.

Its subcellular location is the nucleus. The protein localises to the nucleoplasm. The enzyme catalyses a 3'-end 3'-phospho-ribonucleotide-RNA + ATP = a 3'-end 2',3'-cyclophospho-ribonucleotide-RNA + AMP + diphosphate. Catalyzes the conversion of 3'-phosphate to a 2',3'-cyclic phosphodiester at the end of RNA. The mechanism of action of the enzyme occurs in 3 steps: (A) adenylation of the enzyme by ATP; (B) transfer of adenylate to an RNA-N3'P to produce RNA-N3'PP5'A; (C) and attack of the adjacent 2'-hydroxyl on the 3'-phosphorus in the diester linkage to produce the cyclic end product. The biological role of this enzyme is unknown but it is likely to function in some aspects of cellular RNA processing. In Dictyostelium discoideum (Social amoeba), this protein is Probable RNA 3'-terminal phosphate cyclase (rtca).